We begin with the raw amino-acid sequence, 398 residues long: Elongation factor Tu (398 aa).

Residues 10–207 (KPHVNIGTIG…TVDEYIPEPE (198 aa)) enclose the tr-type G domain. The G1 stretch occupies residues 19–26 (GHVDHGKT). 19–26 (GHVDHGKT) lines the GTP pocket. Mg(2+) is bound at residue T26. Positions 63–67 (GITIN) are G2. Residues 84–87 (DAPG) are G3. GTP contacts are provided by residues 84-88 (DAPGH) and 139-142 (NKVD). The segment at 139–142 (NKVD) is G4. The interval 177-179 (SAL) is G5.

This sequence belongs to the TRAFAC class translation factor GTPase superfamily. Classic translation factor GTPase family. EF-Tu/EF-1A subfamily. As to quaternary structure, monomer.

Its subcellular location is the cytoplasm. It carries out the reaction GTP + H2O = GDP + phosphate + H(+). Its function is as follows. GTP hydrolase that promotes the GTP-dependent binding of aminoacyl-tRNA to the A-site of ribosomes during protein biosynthesis. In Streptococcus thermophilus (strain CNRZ 1066), this protein is Elongation factor Tu.